A 254-amino-acid chain; its full sequence is tRNA uridine(34) hydroxylase (254 aa).

Positions 123-217 (QDPNVILLDT…YLESIPEGES (95 aa)) constitute a Rhodanese domain. C177 acts as the Cysteine persulfide intermediate in catalysis.

The protein belongs to the TrhO family.

It catalyses the reaction uridine(34) in tRNA + AH2 + O2 = 5-hydroxyuridine(34) in tRNA + A + H2O. In terms of biological role, catalyzes oxygen-dependent 5-hydroxyuridine (ho5U) modification at position 34 in tRNAs. In Legionella pneumophila (strain Lens), this protein is tRNA uridine(34) hydroxylase.